The following is a 113-amino-acid chain: MPTRSREEYFNLPLKVDESSGTIGKMFVLVIYDISDNRRRASLAKILAGFGYRVQESAFEAMLTKGQLAKLVARIDRFAIDCDNIRIYKIRGVAAVTFYGRGRLVSAEEFVFF.

Aspartate 33 serves as a coordination point for Mg(2+).

Belongs to the CRISPR-associated endoribonuclease Cas2 protein family. Homodimer, forms a heterotetramer with a Cas1 homodimer. Requires Mg(2+) as cofactor.

Its function is as follows. CRISPR (clustered regularly interspaced short palindromic repeat), is an adaptive immune system that provides protection against mobile genetic elements (viruses, transposable elements and conjugative plasmids). CRISPR clusters contain sequences complementary to antecedent mobile elements and target invading nucleic acids. CRISPR clusters are transcribed and processed into CRISPR RNA (crRNA). Functions as a ssRNA-specific endoribonuclease. Involved in the integration of spacer DNA into the CRISPR cassette. The type III-A Csm effector complex binds crRNA and acts as a crRNA-guided RNase, DNase and cyclic oligoadenylate synthase; binding of target RNA cognate to the crRNA is required for all activities. This chain is CRISPR-associated endoribonuclease Cas2, found in Mycobacterium tuberculosis (strain CDC 1551 / Oshkosh).